A 302-amino-acid chain; its full sequence is Pseudouridine-5'-phosphate glycosidase (302 aa).

Residue Glu25 is the Proton donor of the active site. Substrate contacts are provided by Lys86 and Val106. Asp138 provides a ligand contact to Mn(2+). Position 140-142 (140-142) interacts with substrate; that stretch reads SAD. Lys159 functions as the Nucleophile in the catalytic mechanism.

The protein belongs to the pseudouridine-5'-phosphate glycosidase family. As to quaternary structure, homotrimer. Mn(2+) is required as a cofactor.

The enzyme catalyses D-ribose 5-phosphate + uracil = psi-UMP + H2O. Functionally, catalyzes the reversible cleavage of pseudouridine 5'-phosphate (PsiMP) to ribose 5-phosphate and uracil. Functions biologically in the cleavage direction, as part of a pseudouridine degradation pathway. This Jannaschia sp. (strain CCS1) protein is Pseudouridine-5'-phosphate glycosidase.